The primary structure comprises 564 residues: Isopullulanase (564 aa).

An N-terminal signal peptide occupies residues 1-19 (MRSTGYLLTLSAAFQVAQA). Asn24, Asn94, Asn115, Asn138, Asn186, Asn210, Asn305, Asn381, Asn448, Asn455, Asn460, Asn486, Asn491, Asn503, and Asn535 each carry an N-linked (GlcNAc...) asparagine glycan.

In terms of processing, N-glycosylated.

The protein localises to the secreted. It catalyses the reaction Hydrolysis of pullulan to isopanose (6-alpha-maltosylglucose).. Hydrolyzes pullulan, a linear polymer which is composed of maltotriose units with alpha-1,6 glucosidic linkages, to produce isopanose (Glca1-4Glca1-6Glc). In Aspergillus niger, this protein is Isopullulanase (ipuA).